We begin with the raw amino-acid sequence, 627 residues long: MELGGPGAPRLLPPLLLLLGTGLLRASSHVETRAHAEERLLKKLFSGYNKWSRPVANISDVVLVRFGLSIAQLIDVDEKNQMMTTNVWVKQEWHDYKLRWDPADYENVTSIRIPSELIWRPDIVLYNNADGDFAVTHLTKAHLFHDGRVQWTPPAIYKSSCSIDVTFFPFDQQNCTMKFGSWTYDKAKIDLVNMHSRVDQLDFWESGEWVIVDAVGTYNTRKYECCAEIYPDITYAFVIRRLPLFYTINLIIPCLLISCLTVLVFYLPSECGEKITLCISVLLSLTVFLLLITEIIPSTSLVIPLIGEYLLFTMIFVTLSIVITVFVLNVHHRSPRTHTMPTWVRRVFLDIVPRLLLMKRPSVVKDNCRRLIESMHKMASAPRFWPEPEGEPPATSGTQSLHPPSPSFCVPLDVPAEPGPSCKSPSDQLPPQQPLEAEKASPHPSPGPCRPPHGTQAPGLAKARSLSVQHMSSPGEAVEGGVRCRSRSIQYCVPRDDAAPEADGQAAGALASRNTHSAELPPPDQPSPCKCTCKKEPSSVSPSATVKTRSTKAPPPHLPLSPALTRAVEGVQYIADHLKAEDTDFSVKEDWKYVAMVIDRIFLWMFIIVCLLGTVGLFLPPWLAGMI.

Residues 1 to 26 form the signal peptide; that stretch reads MELGGPGAPRLLPPLLLLLGTGLLRA. Topologically, residues 27–249 are extracellular; that stretch reads SSHVETRAHA…RRLPLFYTIN (223 aa). N-linked (GlcNAc...) asparagine glycosylation occurs at asparagine 57. Ca(2+) contacts are provided by valine 76 and glutamate 78. N-linked (GlcNAc...) asparagine glycosylation is found at asparagine 107 and asparagine 174. 2 disulfide bridges follow: cysteine 161–cysteine 175 and cysteine 225–cysteine 226. Residues 250-269 form a helical membrane-spanning segment; it reads LIIPCLLISCLTVLVFYLPS. Residue cysteine 271 is the site of S-palmitoyl cysteine attachment. Helical transmembrane passes span 275–291 and 306–330; these read ITLC…FLLL and IGEY…VLNV. Over 331–600 the chain is Cytoplasmic; the sequence is HHRSPRTHTM…WKYVAMVIDR (270 aa). Disordered stretches follow at residues 382–481 and 496–561; these read PRFW…VEGG and DDAA…LPLS. The residue at position 424 (serine 424) is a Phosphoserine. Positions 501–511 are enriched in low complexity; sequence EADGQAAGALA. 2 positions are modified to phosphoserine: serine 538 and serine 541. A compositionally biased stretch (polar residues) spans 538 to 548; sequence SSVSPSATVKT. The helical transmembrane segment at 601–619 threads the bilayer; the sequence is IFLWMFIIVCLLGTVGLFL.

It belongs to the ligand-gated ion channel (TC 1.A.9) family. Acetylcholine receptor (TC 1.A.9.1) subfamily. Alpha-4/CHRNA4 sub-subfamily. As to quaternary structure, neuronal AChR is composed of two different types of subunits: alpha and beta. CHRNA4 forms heteropentameric neuronal acetylcholine receptors with CHRNB2 and CHRNB4, as well as CHRNA5 and CHRNB3 as accesory subunits. Found in two major stoichiometric forms, LS (low agonist sensitivity): (CHRNA4)3:(CHRNB2)2 and HS (high agonist sensitivity): (CHRNA4)2:(CHRNB2)3, the two stoichiometric forms differ in their unitary conductance, calcium permeability, ACh sensitivity and potentiation by divalent cation. Cells produce predominantly an (CHRNA4)3:(CHRNB2)2 nAChR. The (CHRNA4)2:(CHRNB2)3 expression is selectively up-regulated by nicotine and has lower single channel conductance and calcium permeability. In the striatum, also forms CHRNA4:CHRNA6:CHRNB2 complexes. Also found in the stoichiometric form: (CHRNA4:CHRNB2)2:CHRNB3. Interacts with RIC3; which is required for proper folding and assembly. Interacts with LYPD6.

Its subcellular location is the synaptic cell membrane. The protein resides in the cell membrane. It carries out the reaction Ca(2+)(in) = Ca(2+)(out). The enzyme catalyses K(+)(in) = K(+)(out). It catalyses the reaction Na(+)(in) = Na(+)(out). Activated by a myriad of ligands such as acetylcholine, cytisine, nicotine, choline and epibatidine. Channel potentiation by calcium is stoichiometry-selective, CHRNA4:CHRNB2 nACh receptor is achieved by calcium association with topographically distinct sites framed by anionic residues within the CHRNA4 subunit and between the CHRNA4 and CHRNB2 subunits. nAChR activity is inhibited by the antagonist alpha-conotoxins BuIA, PnIA, GID and MII, small disulfide-constrained peptides from cone snails. Functionally, component of neuronal acetylcholine receptors (nAChRs) that function as pentameric, ligand-gated cation channels with high calcium permeability among other activities. nAChRs are excitatory neurotrasnmitter receptors formed by a collection of nAChR subunits known to mediate synaptic transmission in the nervous system and the neuromuscular junction. Each nAchR subunit confers differential attributes to channel properties, including activation, deactivation and desensitization kinetics, pH sensitivity, cation permeability, and binding to allosteric modulators. CHRNA4 forms heteropentameric neuronal acetylcholine receptors with CHRNB2 and CHRNB4, as well as CHRNA5 and CHRNB3 as accesory subunits. Is the most abundant nAChR subtype expressed in the central nervous system. Found in two major stoichiometric forms,(CHRNA4)3:(CHRNB2)2 and (CHRNA4)2:(CHRNB2)3, the two stoichiometric forms differ in their unitary conductance, calcium permeability, ACh sensitivity and potentiation by divalent cation. Involved in the modulation of calcium-dependent signaling pathways, influences the release of neurotransmitters, including dopamine, glutamate and GABA. This is Neuronal acetylcholine receptor subunit alpha-4 from Homo sapiens (Human).